The sequence spans 426 residues: MNRNEILFDRAKAIIPGGVNSPVRAFGSVGGVPRFIKKAEGAYVWDENGTRYTDYVGSWGPAIVGHAHPEVVEAVREAALGGLSFGAPTEGEIAIAEQIAEIMPSVERLRLVSSGTEATMTAIRLARGFTGRDKIIKFEGCYHGHSDSLLVKAGSGLLTFGNPSSAGVPADFTKHTLVLEYNNIAQLEEAFAQSGDEIACVIVEPFVGNMNLVRPTEAFVKALRGLTEKHGAVLIYDEVMTGFRVALGGAQSLHGITPDLTTMGKVIGGGMPLAAFGGRKDIMECISPLAGVYQAGTLSGNPIAVAAGLKTLEIIQREGFYENLTALTQRLANGIAAAKAHGIEFAADSVGGMFGLYFAAHVPRNYADMARSNIDAFKRFFHGMLDRGIAFGPSAYEAGFVSAAHTPELIDETVAVAVEVFKAMAA.

K265 is subject to N6-(pyridoxal phosphate)lysine.

The protein belongs to the class-III pyridoxal-phosphate-dependent aminotransferase family. HemL subfamily. In terms of assembly, homodimer. Pyridoxal 5'-phosphate is required as a cofactor.

It localises to the cytoplasm. It carries out the reaction (S)-4-amino-5-oxopentanoate = 5-aminolevulinate. It functions in the pathway porphyrin-containing compound metabolism; protoporphyrin-IX biosynthesis; 5-aminolevulinate from L-glutamyl-tRNA(Glu): step 2/2. The chain is Glutamate-1-semialdehyde 2,1-aminomutase from Neisseria gonorrhoeae (strain NCCP11945).